Consider the following 470-residue polypeptide: Pheromone a factor receptor (470 aa).

Residues 1 to 5 (MSYKS) lie on the Extracellular side of the membrane. Residues 6–23 (AIIGLCLLAVILLAPPLA) form a helical membrane-spanning segment. Residues 24–29 (WHSHTK) lie on the Cytoplasmic side of the membrane. A helical membrane pass occupies residues 30 to 53 (NIPAIILITWLLTMNLTCIVDAAI). Over 54–70 (WSDDDFLTRWDGKGWCD) the chain is Extracellular. A helical transmembrane segment spans residues 71-98 (IVIKLQVGANIGISCAVTNIIYNLHTIL). Topologically, residues 99–116 (KADSVLPDLSSWTKIVKD) are cytoplasmic. Residues 117-134 (LVISLFTPVMVMGFSYLL) traverse the membrane as a helical segment. Residues 135 to 155 (QVFRYGIARYNGCQNLLSPTW) are Extracellular-facing. Residues 156-183 (ITTVLYTMWMLIWSFVGAVYATLVLFVF) form a helical membrane-spanning segment. Residues 184–205 (YKKRKDVRDILHCTNSGLNLTR) are Cytoplasmic-facing. The chain crosses the membrane as a helical span at residues 206-228 (FARLLIFCFIIILVMFPFSVYTF). Residues 229 to 266 (VQDLQQVEGHYTFKNTHSSTIWNTIIKFDPGRPIYNIW) lie on the Extracellular side of the membrane. A helical transmembrane segment spans residues 267-285 (LYVLMSYLVFLIFGLGSDA). Over 286 to 470 (LHMYSKFLRS…EHSSENTAGP (185 aa)) the chain is Cytoplasmic. The segment at 300-470 (FVLDMWKRFI…EHSSENTAGP (171 aa)) is hydrophilic. The disordered stretch occupies residues 440-470 (NFEGESLCYSPASKEENSSSNEHSSENTAGP).

The protein belongs to the G-protein coupled receptor 4 family.

It is found in the membrane. Receptor for the peptide pheromone a factor. The polypeptide is Pheromone a factor receptor (STE3) (Saccharomyces cerevisiae (strain ATCC 204508 / S288c) (Baker's yeast)).